Reading from the N-terminus, the 661-residue chain is 3-hydroxypropionyl-coenzyme A synthetase (661 aa).

D526 is a catalytic residue. The residue at position 617 (K617) is an N6-acetyllysine.

This sequence belongs to the ATP-dependent AMP-binding enzyme family. Homotetramer.

The catalysed reaction is 3-hydroxypropanoate + ATP + CoA = 3-hydroxypropanoyl-CoA + AMP + diphosphate. Functionally, plays a role in the autotrophic CO(2) fixation pathway. Activates 3-hydroxypropionate to its CoA ester. Can also activate propionate, and to a lesser extent acrylate, acetate and butyrate. The polypeptide is 3-hydroxypropionyl-coenzyme A synthetase (Metallosphaera sedula (strain ATCC 51363 / DSM 5348 / JCM 9185 / NBRC 15509 / TH2)).